A 172-amino-acid chain; its full sequence is Putative phosphoesterase Bcer98_0945 (172 aa).

Catalysis depends on histidine 34, which acts as the Proton donor. Short sequence motifs (HXTX) lie at residues 34–37 and 115–118; these read HITL and HLTI. Histidine 115 (proton acceptor) is an active-site residue.

It belongs to the 2H phosphoesterase superfamily. YjcG family.

This is Putative phosphoesterase Bcer98_0945 from Bacillus cytotoxicus (strain DSM 22905 / CIP 110041 / 391-98 / NVH 391-98).